Consider the following 361-residue polypeptide: tRNA-specific 2-thiouridylase MnmA (361 aa).

Residues 8-15 and Met-34 each bind ATP; that span reads GMSGGVDS. The segment at 94-96 is interaction with target base in tRNA; it reads NPD. Cys-99 functions as the Nucleophile in the catalytic mechanism. Cysteines 99 and 195 form a disulfide. Gly-123 provides a ligand contact to ATP. Residues 145-147 are interaction with tRNA; it reads KDQ. The active-site Cysteine persulfide intermediate is the Cys-195. The segment at 307–308 is interaction with tRNA; that stretch reads RY.

The protein belongs to the MnmA/TRMU family.

It localises to the cytoplasm. It carries out the reaction S-sulfanyl-L-cysteinyl-[protein] + uridine(34) in tRNA + AH2 + ATP = 2-thiouridine(34) in tRNA + L-cysteinyl-[protein] + A + AMP + diphosphate + H(+). Its function is as follows. Catalyzes the 2-thiolation of uridine at the wobble position (U34) of tRNA, leading to the formation of s(2)U34. This Legionella pneumophila (strain Paris) protein is tRNA-specific 2-thiouridylase MnmA.